The following is a 101-amino-acid chain: UPF0235 protein MmarC7_0309 (101 aa).

It belongs to the UPF0235 family.

The sequence is that of UPF0235 protein MmarC7_0309 from Methanococcus maripaludis (strain C7 / ATCC BAA-1331).